The primary structure comprises 395 residues: Protein SGT1 (395 aa).

A Glycyl lysine isopeptide (Lys-Gly) (interchain with G-Cter in ubiquitin) cross-link involves residue K32. The segment at 137–175 is disordered; it reads KKNKKQKDSTNKHTIKPVESIENRGDNNSSHSPISPLKI. Phosphoserine is present on residues S168 and S171. The CS domain maps to 182–277; the sequence is SPKFKIDWYQ…IDSTQWKKLE (96 aa). An SGS domain is found at 312–395; it reads SYPSSSKKKI…PPEGMEPKHW (84 aa). The segment at 373 to 395 is disordered; that stretch reads DWEDVSKGTVKTSPPEGMEPKHW.

The protein belongs to the SGT1 family. As to quaternary structure, interacts with SKP1/CBF3D. Part of SCF E3 ubiquitin ligase complexes containing SKP1, CDC53, HRT1 and some F-box proteins. Interacts with CIR1/CDC35.

In terms of biological role, involved in ubiquitination and subsequent proteasomal degradation of target proteins. Required for both entry into S phase and kinetochore function. Also involved in cyclic AMP (cAMP) pathway, possibly by participating in the assembly or the conformational activation of specific multiprotein complexes. This chain is Protein SGT1, found in Saccharomyces cerevisiae (strain ATCC 204508 / S288c) (Baker's yeast).